Reading from the N-terminus, the 107-residue chain is Ribonuclease P protein component 4 (107 aa).

Cys66, Cys69, Cys92, and Cys95 together coordinate Zn(2+).

The protein belongs to the eukaryotic/archaeal RNase P protein component 4 family. As to quaternary structure, consists of a catalytic RNA component and at least 4-5 protein subunits. Requires Zn(2+) as cofactor.

It is found in the cytoplasm. It carries out the reaction Endonucleolytic cleavage of RNA, removing 5'-extranucleotides from tRNA precursor.. Its function is as follows. Part of ribonuclease P, a protein complex that generates mature tRNA molecules by cleaving their 5'-ends. This Methanosarcina acetivorans (strain ATCC 35395 / DSM 2834 / JCM 12185 / C2A) protein is Ribonuclease P protein component 4.